The following is a 666-amino-acid chain: Calpain-10 (666 aa).

The Calpain catalytic domain occupies 13 to 321; it reads LFRDAAFPAS…FDEVTIGYPV (309 aa). Residues Cys-73, His-238, and Asn-263 contribute to the active site. Domain III regions lie at residues 322-488 and 507-648; these read TEAG…ISLS and EWET…IHSQ.

This sequence belongs to the peptidase C2 family. In terms of tissue distribution, ubiquitous.

It localises to the cytoplasm. The protein resides in the nucleus. Its function is as follows. Calcium-regulated non-lysosomal thiol-protease which catalyzes limited proteolysis of substrates involved in cytoskeletal remodeling and signal transduction. May play a role in insulin-stimulated glucose uptake. The chain is Calpain-10 (Capn10) from Rattus norvegicus (Rat).